Here is a 115-residue protein sequence, read N- to C-terminus: uncharacterized protein (115 aa).

The 115-residue stretch at 1–115 (MGVEISLDPP…ETVIKLSAAE (115 aa)) folds into the MSP domain.

This is an uncharacterized protein from Caenorhabditis elegans.